The sequence spans 277 residues: 4-hydroxy-3-prenylphenylpyruvate oxygenase/4-hydroxy-3-prenylbenzoate synthase (277 aa).

This sequence belongs to the aldolase class II family. As to quaternary structure, homotetramer. Requires Fe(2+) as cofactor.

It carries out the reaction 3-dimethylallyl-4-hydroxyphenylpyruvate + O2 = 3-dimethylallyl-4-hydroxymandelate + CO2. The catalysed reaction is 3-dimethylallyl-4-hydroxymandelate + O2 = 3-dimethylallyl-4-hydroxybenzoate + CO2 + H2O. It functions in the pathway antibiotic biosynthesis. With respect to regulation, activated by ascorbate. Functionally, involved in the biosynthesis of ring A of the aminocoumarin antibiotic clorobiocin. Catalyzes two consecutive oxidative decarboxylations of 3-dimethylallyl-4-hydroxyphenylpyruvate (3DMA-4HPP) to yield 3-dimethylallyl-4-hydroxybenzoate (3DMA-4HB) via the 3-dimethylallyl-4-hydroxymandelic acid (3DMA-4HMA) intermediate. In Streptomyces roseochromogenus subsp. oscitans, this protein is 4-hydroxy-3-prenylphenylpyruvate oxygenase/4-hydroxy-3-prenylbenzoate synthase.